The chain runs to 395 residues: Elongation factor Tu (395 aa).

The tr-type G domain occupies 10–205 (KPHVNIGTIG…AVDSYIPMPE (196 aa)). Residues 19–26 (GHIDHGKT) form a G1 region. 19 to 26 (GHIDHGKT) contacts GTP. Position 26 (Thr26) interacts with Mg(2+). The G2 stretch occupies residues 61 to 65 (GITIA). The segment at 82 to 85 (DCPG) is G3. GTP is bound by residues 82–86 (DCPGH) and 137–140 (NKVD). The interval 137–140 (NKVD) is G4. The G5 stretch occupies residues 175 to 177 (SAL).

Belongs to the TRAFAC class translation factor GTPase superfamily. Classic translation factor GTPase family. EF-Tu/EF-1A subfamily. Monomer.

It localises to the cytoplasm. It catalyses the reaction GTP + H2O = GDP + phosphate + H(+). Its function is as follows. GTP hydrolase that promotes the GTP-dependent binding of aminoacyl-tRNA to the A-site of ribosomes during protein biosynthesis. The polypeptide is Elongation factor Tu (Solibacter usitatus (strain Ellin6076)).